Here is a 466-residue protein sequence, read N- to C-terminus: FAD-dependent monooxygenase dpfgE (466 aa).

The first 23 residues, 1–23 (MSQKPFRVIIVGGSVTGLTLAHS), serve as a signal peptide directing secretion. FAD contacts are provided by Glu35, Gly49, and Arg108. N-linked (GlcNAc...) asparagine glycosylation is found at Asn128 and Asn192. FAD is bound by residues Asp312 and Ala325. N-linked (GlcNAc...) asparagine glycosylation occurs at Asn376. A helical transmembrane segment spans residues 443-465 (GVVRNVFFLLAATVIVAWVCRLW).

This sequence belongs to the paxM FAD-dependent monooxygenase family. It depends on FAD as a cofactor.

The protein resides in the membrane. It participates in secondary metabolite biosynthesis; terpenoid biosynthesis. Functionally, FAD-dependent monooxygenase; part of the gene cluster that mediates the biosynthesis of diterpenoid pyrones. The first step of the pathway is the synthesis of the alpha-pyrone moiety by the polyketide synthase dpfgA via condensation of one acetyl-CoA starter unit with 3 malonyl-CoA units and 2 methylations. The alpha-pyrone is then combined with geranylgeranyl pyrophosphate (GGPP) formed by the GGPP synthase dpfgD through the action of the prenyltransferase dpfgC to yield a linear alpha-pyrone diterpenoid. Subsequent steps in the diterpenoid pyrone biosynthetic pathway involve the decalin core formation, which is initiated by the epoxidation of the C10-C11 olefin by the FAD-dependent oxidoreductase dpfgE, and is followed by a cyclization cascade catalyzed by the terpene cyclase dpfgB. The short chain dehydrogenase/reductase dpfgG then oxidizes the 8S hydroxy group to a ketone and the short chain dehydrogenase/reductase dpfgH reduces the ketone to the 8R hydroxy group to yield higginsianin B. Higginsianin B is further methylated by the methyltransferase dpfgI to produce the intermediate named FDDP B. The cytochrome P450 monooxygenase dfgpJ then catalyzes a three-step oxidation at C-27 to generate a carboxylic acid as well as C-26 hydroxylation. Finally, methyltransferase dpfgK methylates the carboxylic acid generated by dpfgJ, yielding the final diterpenoid pyrones from the pathway which were named FDDP D and FDDP E. In Gibberella zeae (strain ATCC MYA-4620 / CBS 123657 / FGSC 9075 / NRRL 31084 / PH-1) (Wheat head blight fungus), this protein is FAD-dependent monooxygenase dpfgE.